The following is a 214-amino-acid chain: Orotidine 5'-phosphate decarboxylase (214 aa).

Residues D11, K33, 59-68, S114, 164-174, G187, and R188 each bind substrate; these read DFKIADIPNT and PGIGSQGGRAS. The active-site Proton donor is the K61.

Belongs to the OMP decarboxylase family. Type 1 subfamily. Homodimer.

The enzyme catalyses orotidine 5'-phosphate + H(+) = UMP + CO2. It functions in the pathway pyrimidine metabolism; UMP biosynthesis via de novo pathway; UMP from orotate: step 2/2. Functionally, catalyzes the decarboxylation of orotidine 5'-monophosphate (OMP) to uridine 5'-monophosphate (UMP). This chain is Orotidine 5'-phosphate decarboxylase, found in Thermoplasma acidophilum (strain ATCC 25905 / DSM 1728 / JCM 9062 / NBRC 15155 / AMRC-C165).